A 108-amino-acid chain; its full sequence is Trp operon repressor homolog (108 aa).

The DNA-binding element occupies 59-82; that stretch reads QRQISQLLGVGVATITRGSNELKS.

The protein belongs to the TrpR family. As to quaternary structure, homodimer.

It is found in the cytoplasm. In terms of biological role, this protein is an aporepressor. When complexed with L-tryptophan it binds the operator region of the trp operon and prevents the initiation of transcription. The protein is Trp operon repressor homolog of Aliivibrio fischeri (strain ATCC 700601 / ES114) (Vibrio fischeri).